The primary structure comprises 116 residues: Iron-sulfur cluster insertion protein ErpA (116 aa).

The iron-sulfur cluster site is built by C44, C108, and C110.

The protein belongs to the HesB/IscA family. As to quaternary structure, homodimer. It depends on iron-sulfur cluster as a cofactor.

Functionally, required for insertion of 4Fe-4S clusters for at least IspG. The chain is Iron-sulfur cluster insertion protein ErpA from Shewanella loihica (strain ATCC BAA-1088 / PV-4).